We begin with the raw amino-acid sequence, 1074 residues long: Telomerase reverse transcriptase (1074 aa).

Positions 240-265 (DKVSCETMQDGESGKTTLVQKQPGSK) are disordered. Over residues 253–262 (GKTTLVQKQP) the composition is skewed to polar residues. A TFLY; involved in RNA binding motif is present at residues 300–305 (TLGFLY). 2 interaction with RNA template regions span residues 355 to 360 (LPRRFF) and 461 to 486 (WKIK…ELSY). In terms of domain architecture, Reverse transcriptase spans 552 to 877 (TPDQVAALPK…CLFPWCGLLL (326 aa)). 3 residues coordinate Mg(2+): Asp-649, Asp-810, and Asp-811.

The protein belongs to the reverse transcriptase family. Telomerase subfamily. Catalytic subunit of the telomerase holoenzyme complex composed minimally of TERT and the telomerase RNA template component (TERC). In terms of tissue distribution, detected at highest levels in gill, ovary and testis, and at lower levels in brain, eye, heart, skin, spleen and stomach.

The protein localises to the nucleus. Its subcellular location is the chromosome. It localises to the telomere. The enzyme catalyses DNA(n) + a 2'-deoxyribonucleoside 5'-triphosphate = DNA(n+1) + diphosphate. Its function is as follows. Telomerase is a ribonucleoprotein enzyme essential for the replication of chromosome termini in most eukaryotes. It elongates telomeres. It is a reverse transcriptase that adds simple sequence repeats to chromosome ends by copying a template sequence within the RNA component of the enzyme. This is Telomerase reverse transcriptase from Takifugu rubripes (Japanese pufferfish).